The chain runs to 171 residues: 2-C-methyl-D-erythritol 2,4-cyclodiphosphate synthase (171 aa).

Positions 8 and 10 each coordinate a divalent metal cation. 4-CDP-2-C-methyl-D-erythritol 2-phosphate is bound by residues 8-10 (DVH) and 34-35 (HS). His42 serves as a coordination point for a divalent metal cation. 4-CDP-2-C-methyl-D-erythritol 2-phosphate-binding positions include 56–58 (DIG), 61–65 (FPDTD), 132–135 (TTTE), Phe139, and Arg142.

It belongs to the IspF family. In terms of assembly, homotrimer. It depends on a divalent metal cation as a cofactor.

It catalyses the reaction 4-CDP-2-C-methyl-D-erythritol 2-phosphate = 2-C-methyl-D-erythritol 2,4-cyclic diphosphate + CMP. It functions in the pathway isoprenoid biosynthesis; isopentenyl diphosphate biosynthesis via DXP pathway; isopentenyl diphosphate from 1-deoxy-D-xylulose 5-phosphate: step 4/6. Functionally, involved in the biosynthesis of isopentenyl diphosphate (IPP) and dimethylallyl diphosphate (DMAPP), two major building blocks of isoprenoid compounds. Catalyzes the conversion of 4-diphosphocytidyl-2-C-methyl-D-erythritol 2-phosphate (CDP-ME2P) to 2-C-methyl-D-erythritol 2,4-cyclodiphosphate (ME-CPP) with a corresponding release of cytidine 5-monophosphate (CMP). The protein is 2-C-methyl-D-erythritol 2,4-cyclodiphosphate synthase of Geotalea daltonii (strain DSM 22248 / JCM 15807 / FRC-32) (Geobacter daltonii).